The sequence spans 89 residues: Putative regulatory protein MAE_11840 (89 aa).

Belongs to the RemA family.

This Microcystis aeruginosa (strain NIES-843 / IAM M-2473) protein is Putative regulatory protein MAE_11840.